A 1120-amino-acid chain; its full sequence is Transcription-repair-coupling factor (1120 aa).

Residues Asp-591 to Ile-756 enclose the Helicase ATP-binding domain. Gly-604–Thr-611 is a binding site for ATP. Residues Asp-709 to Gln-712 carry the DEEQ box motif. The Helicase C-terminal domain occupies Ile-777–Arg-933.

It in the N-terminal section; belongs to the UvrB family. This sequence in the C-terminal section; belongs to the helicase family. RecG subfamily.

Its subcellular location is the cytoplasm. Functionally, couples transcription and DNA repair by recognizing RNA polymerase (RNAP) stalled at DNA lesions. Mediates ATP-dependent release of RNAP and its truncated transcript from the DNA, and recruitment of nucleotide excision repair machinery to the damaged site. In Rickettsia prowazekii (strain Madrid E), this protein is Transcription-repair-coupling factor.